Here is a 498-residue protein sequence, read N- to C-terminus: MHGSCSPWVMLPPPLLLLLLLIATGPTTALTEDEKQTMVDLHNQYRAQVSPPASDMLQMRWDDELAAFAKAYAQKCVWGHNKERGRRGENLFAITDEGMDVPLAVGNWHEEHEYYNFSTATCDPNQMCGHYTQVVWSKTERIGCGSHFCETLQGVEEANIHLLVCNYEPPGNVKGRKPYQEGTPCSQCPLGYSCENSLCEPMRNPEKAQDSPPRVTEVPSTRATEAPSSRETGTPSLATSETLHFSVTKVSDSLATESSPAVETKAPSSLATEGPSSMATEAQAFVTEVPLVSARHMQPSVDEGPVNFLTSTHIPVPKSMDEEASKSSATSVSPKKSLYPKMSLTESGESVPQIQEEAEPKDELSEPEAILPEAEAAPTEAEVELREPEAESPKAESPEAEAESPLSSEALVPVLPAQERGGQKASLEHSGHPASPSLPTFPSASGNATGGRTLALQSSWTGAENPEKADWDLKNSAHVWGPFLGLLLPSLLLLAGMV.

The first 29 residues, 1–29 (MHGSCSPWVMLPPPLLLLLLLIATGPTTA), serve as a signal peptide directing secretion. Residues 39-167 (VDLHNQYRAQ…ANIHLLVCNY (129 aa)) form the SCP domain. Asn116 carries N-linked (GlcNAc...) asparagine glycosylation. 3 disordered regions span residues 204 to 277 (NPEK…GPSS), 317 to 407 (PKSM…SPLS), and 419 to 467 (ERGG…ENPE). Polar residues-rich tracts occupy residues 218 to 277 (VPST…GPSS) and 344 to 353 (LTESGESVPQ). The segment covering 367 to 380 (PEAILPEAEAAPTE) has biased composition (low complexity). A compositionally biased stretch (basic and acidic residues) spans 383 to 397 (VELREPEAESPKAES). Residues 437–447 (SLPTFPSASGN) are compositionally biased toward polar residues. A glycan (N-linked (GlcNAc...) asparagine) is linked at Asn447.

Belongs to the CRISP family. As to quaternary structure, interacts with PSP94/MSMB. N-glycosylated. As to expression, expressed strongly in aorta and skin, and weakly in adipose tissue (at protein level). In heart, found in the extracellular space surrounding cardiomyocytes (at protein level).

The protein localises to the secreted. May inhibit cardiomyocyte growth. The chain is Peptidase inhibitor 16 (Pi16) from Mus musculus (Mouse).